The following is a 354-amino-acid chain: 3-dehydroquinate synthase (354 aa).

NAD(+)-binding positions include 66-71 (SGETSK), 100-104 (GATGD), 124-125 (TT), lysine 136, lysine 145, and 163-166 (FLET). Zn(2+) is bound by residues glutamate 178, histidine 242, and histidine 256.

It belongs to the sugar phosphate cyclases superfamily. Dehydroquinate synthase family. NAD(+) serves as cofactor. The cofactor is Co(2+). It depends on Zn(2+) as a cofactor.

The protein localises to the cytoplasm. The catalysed reaction is 7-phospho-2-dehydro-3-deoxy-D-arabino-heptonate = 3-dehydroquinate + phosphate. The protein operates within metabolic intermediate biosynthesis; chorismate biosynthesis; chorismate from D-erythrose 4-phosphate and phosphoenolpyruvate: step 2/7. Its function is as follows. Catalyzes the conversion of 3-deoxy-D-arabino-heptulosonate 7-phosphate (DAHP) to dehydroquinate (DHQ). The sequence is that of 3-dehydroquinate synthase from Staphylococcus epidermidis (strain ATCC 35984 / DSM 28319 / BCRC 17069 / CCUG 31568 / BM 3577 / RP62A).